The chain runs to 385 residues: 1-deoxy-D-xylulose 5-phosphate reductoisomerase 1 (385 aa).

Residues T11, G12, S13, I14, N39, and N122 each coordinate NADPH. K123 serves as a coordination point for 1-deoxy-D-xylulose 5-phosphate. E124 is an NADPH binding site. Residue D148 participates in Mn(2+) binding. 1-deoxy-D-xylulose 5-phosphate-binding residues include S149, E150, S174, and H197. E150 contributes to the Mn(2+) binding site. An NADPH-binding site is contributed by G203. 4 residues coordinate 1-deoxy-D-xylulose 5-phosphate: S210, N215, K216, and E219. E219 lines the Mn(2+) pocket.

It belongs to the DXR family. The cofactor is Mg(2+). Mn(2+) serves as cofactor.

The catalysed reaction is 2-C-methyl-D-erythritol 4-phosphate + NADP(+) = 1-deoxy-D-xylulose 5-phosphate + NADPH + H(+). It functions in the pathway isoprenoid biosynthesis; isopentenyl diphosphate biosynthesis via DXP pathway; isopentenyl diphosphate from 1-deoxy-D-xylulose 5-phosphate: step 1/6. In terms of biological role, catalyzes the NADPH-dependent rearrangement and reduction of 1-deoxy-D-xylulose-5-phosphate (DXP) to 2-C-methyl-D-erythritol 4-phosphate (MEP). This Bacillus thuringiensis subsp. konkukian (strain 97-27) protein is 1-deoxy-D-xylulose 5-phosphate reductoisomerase 1.